We begin with the raw amino-acid sequence, 53 residues long: Small, acid-soluble spore protein K (53 aa).

The interval 1–53 (MRNKERNFPNQNNNKFEGEPRAKAEYASKRANGTTNTHPQERMHASGKRDDNF) is disordered. Basic and acidic residues-rich tracts occupy residues 16–28 (FEGE…EYAS) and 39–53 (PQER…DDNF).

This sequence belongs to the SspK family.

The protein resides in the spore core. The polypeptide is Small, acid-soluble spore protein K (Geobacillus sp. (strain WCH70)).